Here is a 431-residue protein sequence, read N- to C-terminus: Chaperone SurA (431 aa).

The N-terminal stretch at 1 to 20 (MKNWRTLILGLALSASTAFA) is a signal peptide. 2 consecutive PpiC domains span residues 171–272 (NDEL…KVND) and 282–382 (VTET…QLLD).

It localises to the periplasm. The enzyme catalyses [protein]-peptidylproline (omega=180) = [protein]-peptidylproline (omega=0). Functionally, chaperone involved in the correct folding and assembly of outer membrane proteins. Recognizes specific patterns of aromatic residues and the orientation of their side chains, which are found more frequently in integral outer membrane proteins. May act in both early periplasmic and late outer membrane-associated steps of protein maturation. The protein is Chaperone SurA of Pectobacterium atrosepticum (strain SCRI 1043 / ATCC BAA-672) (Erwinia carotovora subsp. atroseptica).